The primary structure comprises 178 residues: MATIRIHDEANTTIENQEEVASFLDSQEVIYEQWDITRLPEHLSEKYDLTEEEKQQILDTFETEIKDISTRRGYKAQDVISLSDSNPKLDELLENFKREHHHTDDEVRFIVSGHGIFVIQGQDGTFFDVRLNPGDLISVPENIRHYFTLQEDRKVVAVRIFVTTEGWVPIYEKDSVNQ.

His-100, His-102, Glu-106, and His-145 together coordinate Fe(2+). Residues His-100, His-102, Glu-106, and His-145 each contribute to the Ni(2+) site.

It belongs to the acireductone dioxygenase (ARD) family. Monomer. Fe(2+) is required as a cofactor. It depends on Ni(2+) as a cofactor.

It carries out the reaction 1,2-dihydroxy-5-(methylsulfanyl)pent-1-en-3-one + O2 = 3-(methylsulfanyl)propanoate + CO + formate + 2 H(+). The enzyme catalyses 1,2-dihydroxy-5-(methylsulfanyl)pent-1-en-3-one + O2 = 4-methylsulfanyl-2-oxobutanoate + formate + 2 H(+). Its pathway is amino-acid biosynthesis; L-methionine biosynthesis via salvage pathway; L-methionine from S-methyl-5-thio-alpha-D-ribose 1-phosphate: step 5/6. Catalyzes 2 different reactions between oxygen and the acireductone 1,2-dihydroxy-3-keto-5-methylthiopentene (DHK-MTPene) depending upon the metal bound in the active site. Fe-containing acireductone dioxygenase (Fe-ARD) produces formate and 2-keto-4-methylthiobutyrate (KMTB), the alpha-ketoacid precursor of methionine in the methionine recycle pathway. Ni-containing acireductone dioxygenase (Ni-ARD) produces methylthiopropionate, carbon monoxide and formate, and does not lie on the methionine recycle pathway. The chain is Acireductone dioxygenase (mtnD) from Bacillus subtilis (strain 168).